We begin with the raw amino-acid sequence, 217 residues long: Ran-binding protein 1 homolog b (217 aa).

Disordered stretches follow at residues 1 to 32 and 160 to 217; these read MASISNEPERENRDEEETGANEDEDTGAQVAP and ESEE…VPSA. Alanine 2 carries the N-acetylalanine modification. Acidic residues predominate over residues 14 to 26; it reads DEEETGANEDEDT. In terms of domain architecture, RanBD1 spans 29-164; sequence QVAPIVRLEE…FKEVAESEEE (136 aa). Basic and acidic residues predominate over residues 181-217; the sequence is LTVEEKESEKKPVEKAEENKKSEAVEEKKTEESVPSA.

As to quaternary structure, interacts with the GTP-bound form of RAN1, RAN2 and RAN3.

Its subcellular location is the nucleus. The protein localises to the nuclear pore complex. In Arabidopsis thaliana (Mouse-ear cress), this protein is Ran-binding protein 1 homolog b (RANBP1B).